A 191-amino-acid polypeptide reads, in one-letter code: Fe/S biogenesis protein NfuA (191 aa).

Cys149 and Cys152 together coordinate [4Fe-4S] cluster.

This sequence belongs to the NfuA family. As to quaternary structure, homodimer. [4Fe-4S] cluster is required as a cofactor.

Functionally, involved in iron-sulfur cluster biogenesis. Binds a 4Fe-4S cluster, can transfer this cluster to apoproteins, and thereby intervenes in the maturation of Fe/S proteins. Could also act as a scaffold/chaperone for damaged Fe/S proteins. The chain is Fe/S biogenesis protein NfuA from Erwinia tasmaniensis (strain DSM 17950 / CFBP 7177 / CIP 109463 / NCPPB 4357 / Et1/99).